Reading from the N-terminus, the 205-residue chain is Imidazoleglycerol-phosphate dehydratase (205 aa).

It belongs to the imidazoleglycerol-phosphate dehydratase family.

It carries out the reaction D-erythro-1-(imidazol-4-yl)glycerol 3-phosphate = 3-(imidazol-4-yl)-2-oxopropyl phosphate + H2O. It functions in the pathway amino-acid biosynthesis; L-histidine biosynthesis; L-histidine from 5-phospho-alpha-D-ribose 1-diphosphate: step 6/9. The polypeptide is Imidazoleglycerol-phosphate dehydratase (HIS3) (Phaffia rhodozyma (Yeast)).